We begin with the raw amino-acid sequence, 339 residues long: Dihydroorotate dehydrogenase (quinone) (339 aa).

FMN contacts are provided by residues 62 to 66 (AGMDK) and Thr86. Position 66 (Lys66) interacts with substrate. 111 to 115 (NRMGF) contacts substrate. Positions 139 and 172 each coordinate FMN. Substrate is bound at residue Asn172. Ser175 acts as the Nucleophile in catalysis. Position 177 (Asn177) interacts with substrate. Lys217 and Thr245 together coordinate FMN. Residue 246–247 (NT) participates in substrate binding. Residues Gly268, Gly297, and 318–319 (YS) each bind FMN.

Belongs to the dihydroorotate dehydrogenase family. Type 2 subfamily. As to quaternary structure, monomer. It depends on FMN as a cofactor.

It is found in the cell membrane. The enzyme catalyses (S)-dihydroorotate + a quinone = orotate + a quinol. Its pathway is pyrimidine metabolism; UMP biosynthesis via de novo pathway; orotate from (S)-dihydroorotate (quinone route): step 1/1. Its function is as follows. Catalyzes the conversion of dihydroorotate to orotate with quinone as electron acceptor. In Shewanella sp. (strain MR-4), this protein is Dihydroorotate dehydrogenase (quinone).